Here is a 129-residue protein sequence, read N- to C-terminus: uncharacterized protein (129 aa).

Residues 34–57 are disordered; it reads SAPLRPPRELHAAPPPATPTQTVV.

This is an uncharacterized protein from Homo sapiens (Human).